The following is a 108-amino-acid chain: MAEAWRYSAQGVAVAVRVTPRGGRDDIDGLETLSDGRPVVKVRVRAIADGGEANRAVTELLAKAVGVPKRNVRLLSGATSRQKQIAIDGDPKQLGEALRRLVAAKPAE.

This sequence belongs to the UPF0235 family.

The polypeptide is UPF0235 protein Rpal_0418 (Rhodopseudomonas palustris (strain TIE-1)).